We begin with the raw amino-acid sequence, 350 residues long: MLNNTILHAERELYLTLLAWAQQQPNAYEWLTQLPTWLNDIKDKANYAHAPAYQASVARLPTLTVDNVQLNSDILTIDAQLSDSERKQATALLKQLMPWRKGPFKIGSSQNEGEQAEPIFIDTEWHSDWKWQRVAPHLGNLKGRRVLDVGGGSGYHGWRMAGAGADTVIIIDPSCLFYHQFMAIRHFVGSADAHDIGRYRTHYIPVPLEALPDNSQLFDTVFSMGVLYHRQSPFEHLQQLKGQLVKGGELVLETLVIEGDANTVLVPHDRYAQMNNVYFLPSVAALIGWLEKAGFTEVRCVDVAVTSTDEQRKTEWMNYHSLADFLDPNDPTKTIEGYPAPMRATLIAKK.

Carboxy-S-adenosyl-L-methionine is bound by residues K101, W125, K130, G150, 172 to 174 (DPS), 208 to 209 (LE), M224, Y228, and R343.

It belongs to the class I-like SAM-binding methyltransferase superfamily. CmoB family. Homotetramer.

The catalysed reaction is carboxy-S-adenosyl-L-methionine + 5-hydroxyuridine(34) in tRNA = 5-carboxymethoxyuridine(34) in tRNA + S-adenosyl-L-homocysteine + H(+). Catalyzes carboxymethyl transfer from carboxy-S-adenosyl-L-methionine (Cx-SAM) to 5-hydroxyuridine (ho5U) to form 5-carboxymethoxyuridine (cmo5U) at position 34 in tRNAs. The sequence is that of tRNA U34 carboxymethyltransferase from Psychrobacter arcticus (strain DSM 17307 / VKM B-2377 / 273-4).